A 139-amino-acid polypeptide reads, in one-letter code: Small ribosomal subunit protein uS11 (139 aa).

The disordered stretch occupies residues 1–33 (MPPAKKGPATSARKGQKTRRREKKNVPHGAAHI). Positions 14-23 (KGQKTRRREK) are enriched in basic residues.

Belongs to the universal ribosomal protein uS11 family. In terms of assembly, part of the 30S ribosomal subunit. Interacts with proteins S7 and S18. Binds to IF-3.

Its function is as follows. Located on the platform of the 30S subunit, it bridges several disparate RNA helices of the 16S rRNA. Forms part of the Shine-Dalgarno cleft in the 70S ribosome. The sequence is that of Small ribosomal subunit protein uS11 from Mycobacterium bovis (strain ATCC BAA-935 / AF2122/97).